A 54-amino-acid chain; its full sequence is Large ribosomal subunit protein bL33C (54 aa).

The protein belongs to the bacterial ribosomal protein bL33 family.

The polypeptide is Large ribosomal subunit protein bL33C (Streptomyces griseus subsp. griseus (strain JCM 4626 / CBS 651.72 / NBRC 13350 / KCC S-0626 / ISP 5235)).